The chain runs to 123 residues: uncharacterized protein (123 aa).

A disordered region spans residues 89–123; that stretch reads GVGGRKLGSEGQSLSENSEQRSLMRWGCGGSSERR. A compositionally biased stretch (polar residues) spans 98-109; sequence EGQSLSENSEQR.

This is an uncharacterized protein from Encephalitozoon cuniculi (strain GB-M1) (Microsporidian parasite).